Here is a 232-residue protein sequence, read N- to C-terminus: Large ribosomal subunit protein uL1 (232 aa).

Belongs to the universal ribosomal protein uL1 family. Part of the 50S ribosomal subunit.

Binds directly to 23S rRNA. The L1 stalk is quite mobile in the ribosome, and is involved in E site tRNA release. In terms of biological role, protein L1 is also a translational repressor protein, it controls the translation of the L11 operon by binding to its mRNA. The polypeptide is Large ribosomal subunit protein uL1 (Ruegeria sp. (strain TM1040) (Silicibacter sp.)).